The primary structure comprises 334 residues: D-alanine--D-alanine ligase (334 aa).

Residues 110 to 306 (KHVLKSLGID…FDHVVDLIVQ (197 aa)) enclose the ATP-grasp domain. An ATP-binding site is contributed by 138–190 (LPYPFVIKPVRGGSTIGVHAIFSKSEYLDLSAHADTLEDRMIVEEYVSGQEVQ). Positions 258, 272, and 274 each coordinate Mg(2+).

It belongs to the D-alanine--D-alanine ligase family. It depends on Mg(2+) as a cofactor. Mn(2+) is required as a cofactor.

It is found in the cytoplasm. The enzyme catalyses 2 D-alanine + ATP = D-alanyl-D-alanine + ADP + phosphate + H(+). Its pathway is cell wall biogenesis; peptidoglycan biosynthesis. Cell wall formation. This Anaplasma marginale (strain Florida) protein is D-alanine--D-alanine ligase.